A 209-amino-acid polypeptide reads, in one-letter code: Imidazole glycerol phosphate synthase subunit HisH (209 aa).

The 205-residue stretch at 1-205 (MIAIIDYGMG…KGVVETWKSS (205 aa)) folds into the Glutamine amidotransferase type-1 domain. Residue Cys79 is the Nucleophile of the active site. Active-site residues include His180 and Glu182.

Heterodimer of HisH and HisF.

It is found in the cytoplasm. The enzyme catalyses 5-[(5-phospho-1-deoxy-D-ribulos-1-ylimino)methylamino]-1-(5-phospho-beta-D-ribosyl)imidazole-4-carboxamide + L-glutamine = D-erythro-1-(imidazol-4-yl)glycerol 3-phosphate + 5-amino-1-(5-phospho-beta-D-ribosyl)imidazole-4-carboxamide + L-glutamate + H(+). It catalyses the reaction L-glutamine + H2O = L-glutamate + NH4(+). It participates in amino-acid biosynthesis; L-histidine biosynthesis; L-histidine from 5-phospho-alpha-D-ribose 1-diphosphate: step 5/9. Its function is as follows. IGPS catalyzes the conversion of PRFAR and glutamine to IGP, AICAR and glutamate. The HisH subunit catalyzes the hydrolysis of glutamine to glutamate and ammonia as part of the synthesis of IGP and AICAR. The resulting ammonia molecule is channeled to the active site of HisF. The chain is Imidazole glycerol phosphate synthase subunit HisH from Bacillus anthracis (strain A0248).